Consider the following 408-residue polypeptide: DNA replication and repair protein RecF (408 aa).

ATP is bound at residue G30–T37. 2 disordered regions span residues D220 to R252 and S389 to A408. A compositionally biased stretch (low complexity) spans S389–G402.

This sequence belongs to the RecF family.

It localises to the cytoplasm. In terms of biological role, the RecF protein is involved in DNA metabolism; it is required for DNA replication and normal SOS inducibility. RecF binds preferentially to single-stranded, linear DNA. It also seems to bind ATP. The chain is DNA replication and repair protein RecF from Clavibacter sepedonicus (Clavibacter michiganensis subsp. sepedonicus).